Reading from the N-terminus, the 250-residue chain is Flavin-dependent thymidylate synthase (250 aa).

The ThyX domain maps to 7-233; sequence LRVQLIAKTD…PAVFADFEVT (227 aa). FAD-binding positions include Ser71, 95 to 97, and Gln103; that span reads RHR. Residues 92–95, 103–107, and Arg172 each bind dUMP; these read ELIR and QLSQR. The ThyX motif motif lies at 95–105; it reads RHRHFSYSQLS. Residues 188 to 190 and His194 each bind FAD; that span reads NYR. Arg199 is a dUMP binding site. Arg199 functions as the Involved in ionization of N3 of dUMP, leading to its activation in the catalytic mechanism.

Belongs to the thymidylate synthase ThyX family. As to quaternary structure, homotetramer. Requires FAD as cofactor.

The catalysed reaction is dUMP + (6R)-5,10-methylene-5,6,7,8-tetrahydrofolate + NADPH + H(+) = dTMP + (6S)-5,6,7,8-tetrahydrofolate + NADP(+). It participates in pyrimidine metabolism; dTTP biosynthesis. Catalyzes the reductive methylation of 2'-deoxyuridine-5'-monophosphate (dUMP) to 2'-deoxythymidine-5'-monophosphate (dTMP) while utilizing 5,10-methylenetetrahydrofolate (mTHF) as the methyl donor, and NADPH and FADH(2) as the reductant. The polypeptide is Flavin-dependent thymidylate synthase (Mycobacterium bovis (strain ATCC BAA-935 / AF2122/97)).